The primary structure comprises 314 residues: Mitochondrial translation factor 2 (314 aa).

The disordered stretch occupies residues 111–136; that stretch reads ENSSNIYDPSSPPDSPRKQQTHLGTI.

Component of the MRH5C complex, composed of mrh5, ppr4, mtf2, and sls1. Proteins mtf2 and sls1 form a subcomplex that serves as a scaffold to bring mrh5 and ppr4 together. The MRH5C complex associates with the small subunit of the mitochondrial ribosome.

Translation activation factor that as part of the MRH5C complex specifically recruits cox1 mRNA to the mitochondrial ribosome for translation initiation. In Schizosaccharomyces pombe (strain 972 / ATCC 24843) (Fission yeast), this protein is Mitochondrial translation factor 2.